The chain runs to 642 residues: RNA polymerase sigma factor RpoD (642 aa).

Residues 199–228 are disordered; it reads HLETTAPEKPSNDNSDENEDDEESEEDADE. Positions 212-228 are enriched in acidic residues; that stretch reads NSDENEDDEESEEDADE. Residues 403–473 are sigma-70 factor domain-2; it reads MIQANLRLVI…TRSIADQART (71 aa). The Interaction with polymerase core subunit RpoC motif lies at 427-430; the sequence is DLIQ. The sigma-70 factor domain-3 stretch occupies residues 482 to 558; it reads ETINKMNRIS…DANNVAPADA (77 aa). The sigma-70 factor domain-4 stretch occupies residues 571-624; the sequence is ILESLTPREAKVLRMRFGIDMNTDHTLEEVGRQFDVTRERIRQIEAKALRKLRH. The segment at residues 597–616 is a DNA-binding region (H-T-H motif); it reads LEEVGRQFDVTRERIRQIEA.

This sequence belongs to the sigma-70 factor family. RpoD/SigA subfamily. As to quaternary structure, interacts transiently with the RNA polymerase catalytic core.

It is found in the cytoplasm. In terms of biological role, sigma factors are initiation factors that promote the attachment of RNA polymerase to specific initiation sites and are then released. This sigma factor is the primary sigma factor during exponential growth. This is RNA polymerase sigma factor RpoD from Neisseria gonorrhoeae.